Consider the following 397-residue polypeptide: Putative 3'(2'),5'-bisphosphate nucleotidase, mitochondrial (397 aa).

The transit peptide at 1-16 (MYILDTGARFSAVRFS) directs the protein to the mitochondrion. The active-site Proton acceptor is the aspartate 91. Residues glutamate 114, aspartate 174, isoleucine 176, and aspartate 177 each coordinate Mg(2+). The active-site Proton acceptor is threonine 179. Adenosine 3',5'-bisphosphate contacts are provided by threonine 179, serine 305, lysine 308, and aspartate 334. The AMP site is built by serine 305, lysine 308, and aspartate 334. A Mg(2+)-binding site is contributed by aspartate 334.

It belongs to the inositol monophosphatase superfamily. Mg(2+) is required as a cofactor.

The protein resides in the mitochondrion. It carries out the reaction 3'-phosphoadenylyl sulfate + H2O = adenosine 5'-phosphosulfate + phosphate. The catalysed reaction is adenosine 3',5'-bisphosphate + H2O = AMP + phosphate. It catalyses the reaction adenosine 2',5'-bisphosphate + H2O = AMP + phosphate. In terms of biological role, phosphatase that converts adenosine 3'-phosphate 5'-phosphosulfate (PAPS) to adenosine 5'-phosphosulfate (APS) and 3'(2')-phosphoadenosine 5'-phosphate (PAP) to AMP. The sequence is that of Putative 3'(2'),5'-bisphosphate nucleotidase, mitochondrial from Arabidopsis thaliana (Mouse-ear cress).